Here is a 324-residue protein sequence, read N- to C-terminus: tRNA (cytidine(32)/guanosine(34)-2'-O)-methyltransferase (324 aa).

S-adenosyl-L-methionine contacts are provided by glycine 53, tryptophan 55, aspartate 75, aspartate 91, and aspartate 116. Residue lysine 156 is the Proton acceptor of the active site. Residues 221–240 are required for binding to WDR6; that stretch reads DFNQLDGPTRVIVPFVACGD.

It belongs to the class I-like SAM-binding methyltransferase superfamily. RNA methyltransferase RlmE family. TRM7 subfamily. In terms of assembly, interacts with WDR6; the interaction is direct, and required for 2'-O-methylation of position 34 in substrate tRNAs.

Its subcellular location is the cytoplasm. The protein localises to the nucleus. It carries out the reaction cytidine(32)/guanosine(34) in tRNA + 2 S-adenosyl-L-methionine = 2'-O-methylcytidine(32)/2'-O-methylguanosine(34) in tRNA + 2 S-adenosyl-L-homocysteine + 2 H(+). Its function is as follows. Methylates the 2'-O-ribose of nucleotides at positions 32 and 34 of the tRNA anticodon loop of substrate tRNAs. Requisite for faithful cytoplasmic translation. Requires THADA for methylation of the cytidine at position 32 of the anticodon loop of substrate tRNAs. Requires WDR6 for methylation of the nucleotide at position 34 of the anticodon loop of substrate tRNAs. Promotes translation efficiency of the UUU codon. Plays a role in neurogenesis. Required for expression of genes involved in neurogenesis and mitochondrial translation and energy generation. Requisite for RNA-mediated gene silencing. May modify position 32 in tRNA(Arg(ACG)), tRNA(Gln(CUG)), tRNA(Leu(UAA)), tRNA(Leu(UAG)), tRNA(Leu(AAG)), tRNA(Leu(CAG)), tRNA(Phe(GAA)), tRNA(Trp(CCA)) and tRNA(Val(AAC)), and position 34 in tRNA(Phe(GAA)), tRNA(Leu(CAA)), tRNA(Leu(UAA)), tRNA(Sec(UCA)), and tRNA(Trp(CCA)). The protein is tRNA (cytidine(32)/guanosine(34)-2'-O)-methyltransferase of Mus musculus (Mouse).